The following is a 5263-amino-acid chain: Fibroin heavy chain (5263 aa).

The first 21 residues, 1-21 (MRVKTFVILCCALQYVAYTNA), serve as a signal peptide directing secretion. Positions 149 to 5206 (AAVGAGAGAG…GSGAGAGGSV (5058 aa)) are highly repetitive. Cys5260 and Cys5263 are oxidised to a cystine.

As to quaternary structure, silk fibroin elementary unit consists in a disulfide-linked heavy and light chain and a p25 glycoprotein in molar ratios of 6:6:1. This results in a complex of approximately 2.3 MDa. Post-translationally, the interchain disulfide bridge is essential for the intracellular transport and secretion of fibroin. In terms of tissue distribution, produced exclusively in the posterior (PSG) section of silk glands, which are essentially modified salivary glands.

Its function is as follows. Core component of the silk filament; a strong, insoluble and chemically inert fiber. The chain is Fibroin heavy chain (FIBH) from Bombyx mori (Silk moth).